Here is a 168-residue protein sequence, read N- to C-terminus: Protein-export protein SecB (168 aa).

Belongs to the SecB family. As to quaternary structure, homotetramer, a dimer of dimers. One homotetramer interacts with 1 SecA dimer.

It localises to the cytoplasm. Functionally, one of the proteins required for the normal export of preproteins out of the cell cytoplasm. It is a molecular chaperone that binds to a subset of precursor proteins, maintaining them in a translocation-competent state. It also specifically binds to its receptor SecA. This is Protein-export protein SecB from Saccharophagus degradans (strain 2-40 / ATCC 43961 / DSM 17024).